The following is a 1390-amino-acid chain: DNA-directed RNA polymerase III subunit RPC1 (1390 aa).

Positions 69, 72, 79, 82, 109, and 112 each coordinate Zn(2+). DNA is bound at residue Lys-144. Zn(2+) is bound by residues Cys-156 and Cys-159. Residues Lys-167, Ser-326, Lys-348, Arg-353, Arg-360, and Arg-366 each contribute to the DNA site. Lys-445 carries the N6-acetyllysine modification. Residue Arg-464 coordinates RNA. Asp-499, Asp-501, and Asp-503 together coordinate Mg(2+). Asp-503 contributes to the RNA binding site. Positions 844–856 are bridging helix; that stretch reads PTEFFFHTMAGRE. DNA-binding residues include Arg-1159, Arg-1305, and Lys-1323.

Belongs to the RNA polymerase beta' chain family. In terms of assembly, component of the RNA polymerase III (Pol III) complex consisting of 17 subunits: a ten-subunit catalytic core composed of POLR3A/RPC1, POLR3B/RPC2, POLR1C/RPAC1, POLR1D/RPAC2, POLR3K/RPC10, POLR2E/RPABC1, POLR2F/RPABC2, POLR2H/RPABC3, POLR2K/RPABC4 and POLR2L/RPABC5; a mobile stalk composed of two subunits POLR3H/RPC8 and CRCP/RPC9, protruding from the core and functioning primarily in transcription initiation; and additional subunits homologous to general transcription factors of the RNA polymerase II machinery, POLR3C/RPC3-POLR3F/RPC6-POLR3G/RPC7 heterotrimer required for transcription initiation and POLR3D/RPC4-POLR3E/RPC5 heterodimer involved in both transcription initiation and termination. As part of the RNA polymerase III complex, interacts with PKP2. Requires Mg(2+) as cofactor.

Its subcellular location is the nucleus. The protein localises to the cytoplasm. It is found in the cytosol. It carries out the reaction RNA(n) + a ribonucleoside 5'-triphosphate = RNA(n+1) + diphosphate. Its function is as follows. Catalytic core component of RNA polymerase III (Pol III), a DNA-dependent RNA polymerase which synthesizes small non-coding RNAs using the four ribonucleoside triphosphates as substrates. Synthesizes 5S rRNA, snRNAs, tRNAs and miRNAs from at least 500 distinct genomic loci. Pol III-mediated transcription cycle proceeds through transcription initiation, transcription elongation and transcription termination stages. During transcription initiation, Pol III is recruited to DNA promoters type I, II or III with the help of general transcription factors and other specific initiation factors. Once the polymerase has escaped from the promoter it enters the elongation phase during which RNA is actively polymerized, based on complementarity with the template DNA strand. Transcription termination involves the release of the RNA transcript and polymerase from the DNA. Forms Pol III active center together with the second largest subunit POLR3B/RPC2. Appends one nucleotide at a time to the 3' end of the nascent RNA, with POLR3A/RPC1 contributing a Mg(2+)-coordinating DxDGD motif, and POLR3B/RPC2 participating in the coordination of a second Mg(2+) ion and providing lysine residues believed to facilitate Watson-Crick base pairing between the incoming nucleotide and template base. Typically, Mg(2+) ions direct a 5' nucleoside triphosphate to form a phosphodiester bond with the 3' hydroxyl of the preceding nucleotide of the nascent RNA, with the elimination of pyrophosphate. Pol III plays a key role in sensing and limiting infection by intracellular bacteria and DNA viruses. Acts as a nuclear and cytosolic DNA sensor involved in innate immune response. Can sense non-self dsDNA that serves as template for transcription into dsRNA. The non-self RNA polymerase III transcripts, such as Epstein-Barr virus-encoded RNAs (EBERs) induce type I interferon and NF-kappa-B through the RIG-I pathway. The chain is DNA-directed RNA polymerase III subunit RPC1 from Bos taurus (Bovine).